Consider the following 451-residue polypeptide: UDP-N-acetylmuramoylalanine--D-glutamate ligase (451 aa).

Position 118–124 (118–124 (GSNGKTT)) interacts with ATP.

The protein belongs to the MurCDEF family.

It is found in the cytoplasm. The catalysed reaction is UDP-N-acetyl-alpha-D-muramoyl-L-alanine + D-glutamate + ATP = UDP-N-acetyl-alpha-D-muramoyl-L-alanyl-D-glutamate + ADP + phosphate + H(+). It functions in the pathway cell wall biogenesis; peptidoglycan biosynthesis. In terms of biological role, cell wall formation. Catalyzes the addition of glutamate to the nucleotide precursor UDP-N-acetylmuramoyl-L-alanine (UMA). The protein is UDP-N-acetylmuramoylalanine--D-glutamate ligase of Shouchella clausii (strain KSM-K16) (Alkalihalobacillus clausii).